A 255-amino-acid chain; its full sequence is MTMPLYASPEQLMRERSELARKGIARGRSVVVLKYRGGVLFVAENPSPTLHKVSEIYDRIGFAAVGRYSEFESLRRGGIRHVDLQGYMYDRRDVNARALANVYAQTLSTIFTEQLKPFEVEICVAEVGNNSSEDELYRLTYDGSIVMDEPKFVVMGGQTDAINAKLRETYSDDMELATALAVAVEALRAPSTSGASGNGETEPSKLEVAILDRERPGRKFRRITGAELESLMPAEDERTGSSGGSDKSSGDGEQN.

Over residues Pro-190–Thr-201 the composition is skewed to polar residues. Residues Pro-190–Asn-255 are disordered. Positions Glu-202–Gly-217 are enriched in basic and acidic residues.

Belongs to the peptidase T1A family. In terms of assembly, the 20S proteasome core is composed of 14 alpha and 14 beta subunits that assemble into four stacked heptameric rings, resulting in a barrel-shaped structure. The two inner rings, each composed of seven catalytic beta subunits, are sandwiched by two outer rings, each composed of seven alpha subunits. The catalytic chamber with the active sites is on the inside of the barrel. Has a gated structure, the ends of the cylinder being occluded by the N-termini of the alpha-subunits. Is capped by the proteasome-associated ATPase, ARC.

It is found in the cytoplasm. The protein operates within protein degradation; proteasomal Pup-dependent pathway. The formation of the proteasomal ATPase ARC-20S proteasome complex, likely via the docking of the C-termini of ARC into the intersubunit pockets in the alpha-rings, may trigger opening of the gate for substrate entry. Interconversion between the open-gate and close-gate conformations leads to a dynamic regulation of the 20S proteasome proteolysis activity. Functionally, component of the proteasome core, a large protease complex with broad specificity involved in protein degradation. The chain is Proteasome subunit alpha from Saccharomonospora viridis (strain ATCC 15386 / DSM 43017 / JCM 3036 / CCUG 5913 / NBRC 12207 / NCIMB 9602 / P101) (Thermoactinomyces viridis).